We begin with the raw amino-acid sequence, 513 residues long: 2,3-bisphosphoglycerate-independent phosphoglycerate mutase (513 aa).

The Mn(2+) site is built by Asp-12 and Ser-62. The Phosphoserine intermediate role is filled by Ser-62. Residues His-123, 153–154 (RD), Arg-185, Arg-191, 260–263 (RPDR), and Lys-333 contribute to the substrate site. 5 residues coordinate Mn(2+): Asp-400, His-404, Asp-441, His-442, and His-460.

Belongs to the BPG-independent phosphoglycerate mutase family. Monomer. Mn(2+) is required as a cofactor.

The catalysed reaction is (2R)-2-phosphoglycerate = (2R)-3-phosphoglycerate. It functions in the pathway carbohydrate degradation; glycolysis; pyruvate from D-glyceraldehyde 3-phosphate: step 3/5. In terms of biological role, catalyzes the interconversion of 2-phosphoglycerate and 3-phosphoglycerate. The chain is 2,3-bisphosphoglycerate-independent phosphoglycerate mutase from Clostridium tetani (strain Massachusetts / E88).